The primary structure comprises 422 residues: Glutamate-1-semialdehyde 2,1-aminomutase (422 aa).

Lys258 carries the N6-(pyridoxal phosphate)lysine modification.

The protein belongs to the class-III pyridoxal-phosphate-dependent aminotransferase family. HemL subfamily. As to quaternary structure, homodimer. Pyridoxal 5'-phosphate serves as cofactor.

The protein resides in the cytoplasm. It carries out the reaction (S)-4-amino-5-oxopentanoate = 5-aminolevulinate. Its pathway is porphyrin-containing compound metabolism; protoporphyrin-IX biosynthesis; 5-aminolevulinate from L-glutamyl-tRNA(Glu): step 2/2. The polypeptide is Glutamate-1-semialdehyde 2,1-aminomutase (Chlamydia trachomatis serovar D (strain ATCC VR-885 / DSM 19411 / UW-3/Cx)).